The chain runs to 236 residues: Class B acid phosphatase (236 aa).

A signal peptide spans 1-22 (MNHTLRSITLVLACVASLSANA). Asp-70 acts as the Nucleophile in catalysis. Positions 70 and 72 each coordinate Mg(2+). Catalysis depends on Asp-72, which acts as the Proton donor. Substrate-binding positions include 138 to 139 (TG) and Lys-176. Asp-191 lines the Mg(2+) pocket.

Belongs to the class B bacterial acid phosphatase family. As to quaternary structure, homotetramer. The cofactor is Mg(2+).

Its subcellular location is the periplasm. The enzyme catalyses a phosphate monoester + H2O = an alcohol + phosphate. Functionally, dephosphorylates several organic phosphate monoesters. Also has a phosphotransferase activity catalyzing the transfer of low-energy phosphate groups from organic phosphate monoesters to free hydroxyl groups of various organic compounds. The protein is Class B acid phosphatase of Marinomonas sp. (strain MWYL1).